A 302-amino-acid polypeptide reads, in one-letter code: Acidic endochitinase (302 aa).

The first 30 residues, 1 to 30 (MTNMTLRKHVIYFLFFISCSLSKPSDASRG), serve as a signal peptide directing secretion. The GH18 domain maps to 31 to 302 (GIAIYWGQNG…GYSSSILASV (272 aa)). 2 disulfides stabilise this stretch: Cys49–Cys96 and Cys79–Cys86. The active-site Proton donor is the Glu156. Cys188 and Cys217 are disulfide-bonded.

This sequence belongs to the glycosyl hydrolase 18 family. Chitinase class III subfamily.

It is found in the secreted. Its subcellular location is the extracellular space. The catalysed reaction is Random endo-hydrolysis of N-acetyl-beta-D-glucosaminide (1-&gt;4)-beta-linkages in chitin and chitodextrins.. In terms of biological role, this protein functions as a defense against chitin containing fungal pathogens. This is Acidic endochitinase (CHIB1) from Arabidopsis thaliana (Mouse-ear cress).